The following is a 122-amino-acid chain: Large ribosomal subunit protein uL14 (122 aa).

It belongs to the universal ribosomal protein uL14 family. As to quaternary structure, part of the 50S ribosomal subunit. Forms a cluster with proteins L3 and L19. In the 70S ribosome, L14 and L19 interact and together make contacts with the 16S rRNA in bridges B5 and B8.

In terms of biological role, binds to 23S rRNA. Forms part of two intersubunit bridges in the 70S ribosome. This chain is Large ribosomal subunit protein uL14, found in Nitrosomonas europaea (strain ATCC 19718 / CIP 103999 / KCTC 2705 / NBRC 14298).